A 756-amino-acid polypeptide reads, in one-letter code: Putative DNA ligase 052L (756 aa).

Lysine 103 (N6-AMP-lysine intermediate) is an active-site residue. The segment covering 610–620 has biased composition (low complexity); sequence PSAAGSASPCR. The disordered stretch occupies residues 610 to 630; it reads PSAAGSASPCRPTKRRDDWFD. A BRCT domain is found at 648–742; it reads KKRPPMQGYV…LKRQRKCRAR (95 aa).

This sequence belongs to the NAD-dependent DNA ligase family.

It carries out the reaction NAD(+) + (deoxyribonucleotide)n-3'-hydroxyl + 5'-phospho-(deoxyribonucleotide)m = (deoxyribonucleotide)n+m + AMP + beta-nicotinamide D-nucleotide.. Functionally, catalyzes the formation of phosphodiester linkages between 5'-phosphoryl and 3'-hydroxyl groups in double-stranded DNA using NAD as a coenzyme and as the energy source for the reaction. This Invertebrate iridescent virus 3 (IIV-3) protein is Putative DNA ligase 052L.